The chain runs to 522 residues: Cytochrome P450 1A1 (522 aa).

Residue F229 participates in substrate binding. C463 lines the heme pocket.

This sequence belongs to the cytochrome P450 family. Requires heme as cofactor. As to expression, liver.

The protein resides in the endoplasmic reticulum membrane. Its subcellular location is the microsome membrane. It carries out the reaction an organic molecule + reduced [NADPH--hemoprotein reductase] + O2 = an alcohol + oxidized [NADPH--hemoprotein reductase] + H2O + H(+). In terms of biological role, cytochromes P450 are a group of heme-thiolate monooxygenases. They oxidize a variety of structurally unrelated compounds, including steroids, fatty acids, and xenobiotics. The sequence is that of Cytochrome P450 1A1 (cyp1a1) from Oncorhynchus mykiss (Rainbow trout).